A 62-amino-acid polypeptide reads, in one-letter code: Small ribosomal subunit protein eS30z/eS30y/eS30x (62 aa).

Residues 1-38 (MGKVHGSLARAGKVRGQTPKVAKQDKKKKPRGRAHKRL) form a disordered region. Residues 25–38 (DKKKKPRGRAHKRL) are compositionally biased toward basic residues.

This sequence belongs to the eukaryotic ribosomal protein eS30 family.

The protein is Small ribosomal subunit protein eS30z/eS30y/eS30x (RPS30A) of Arabidopsis thaliana (Mouse-ear cress).